Reading from the N-terminus, the 773-residue chain is 4'-phosphopantetheine phosphatase (773 aa).

The residue at position 2 (Ala-2) is an N-acetylalanine. The interval 2–402 (AECRASGGGS…APELCPTQRA (401 aa)) is pantothenate kinase. Residues Ser-196 and Ser-199 each contribute to the acetyl-CoA site. Tyr-320 bears the 3'-nitrotyrosine mark. Residues 403–773 (RSGTFDLLEM…VIFKYEVPAE (371 aa)) form a 4'-phosphopantetheine phosphatase region. Residue Ser-404 is modified to Phosphoserine. A Phosphothreonine modification is found at Thr-406. The Mn(2+) site is built by Asp-623, Asn-624, and Asp-659. Positions 724 to 728 (EGMGR) match the Subfamily II EGMGR motif motif.

It in the N-terminal section; belongs to the type II pantothenate kinase family. This sequence in the C-terminal section; belongs to the damage-control phosphatase family. Phosphopantetheine phosphatase (II) subfamily. In terms of assembly, homodimer. Interacts with PKM. The cofactor is Mn(2+). It depends on Ni(2+) as a cofactor.

It is found in the cytoplasm. It carries out the reaction (R)-4'-phosphopantetheine + H2O = (R)-pantetheine + phosphate. It catalyses the reaction (R)-4'-phosphopantetheine sulfonate + H2O = (R)-pantetheine sulfonate + phosphate. The catalysed reaction is (R)-4'-phospho-S-sulfopantetheine + H2O = (R)-S-sulfopantetheine + phosphate. With respect to regulation, activity is strongly promoted by Co(2+), Ni(2+), Mg(2+) and Mn(2+). Activity is inhibited by EDTA. Its function is as follows. Phosphatase which shows a preference for 4'-phosphopantetheine and its oxidatively damaged forms (sulfonate or S-sulfonate), providing strong indirect evidence that the phosphatase activity pre-empts damage in the coenzyme A (CoA) pathway. Hydrolyzing excess 4'-phosphopantetheine could constitute a directed overflow mechanism to prevent its oxidation to the S-sulfonate, sulfonate, or other forms. Hydrolyzing 4'-phosphopantetheine sulfonate or S-sulfonate would forestall their conversion to inactive forms of CoA and acyl carrier protein. May play a role in the physiological regulation of CoA intracellular levels. The polypeptide is 4'-phosphopantetheine phosphatase (Rattus norvegicus (Rat)).